The sequence spans 310 residues: O-acetylserine sulfhydrylase (310 aa).

Lys-44 is modified (N6-(pyridoxal phosphate)lysine). Pyridoxal 5'-phosphate is bound by residues Asn-74, 178-182 (GTGGT), and Ser-266.

It belongs to the cysteine synthase/cystathionine beta-synthase family. Homodimer. It depends on pyridoxal 5'-phosphate as a cofactor.

The enzyme catalyses O-acetyl-L-serine + hydrogen sulfide = L-cysteine + acetate. The protein operates within amino-acid biosynthesis; L-cysteine biosynthesis; L-cysteine from L-serine: step 2/2. Its function is as follows. Catalyzes the conversion of O-acetylserine (OAS) to cysteine through the elimination of acetate and addition of hydrogen sulfide. This is O-acetylserine sulfhydrylase (cysK) from Mycobacterium bovis (strain ATCC BAA-935 / AF2122/97).